Consider the following 271-residue polypeptide: Norsolorinic acid ketoreductase (271 aa).

Residues Met-1 to Pro-22 are disordered. Positions 36, 112, 185, 189, 216, and 218 each coordinate NADP(+). The active-site Proton donor is Tyr-185. Catalysis depends on Lys-189, which acts as the Lowers pKa of active site Tyr.

It belongs to the short-chain dehydrogenases/reductases (SDR) family.

Its subcellular location is the cytoplasm. The protein localises to the cytosol. It localises to the vacuole. It carries out the reaction (1'S)-averantin + NADP(+) = norsolorinic acid + NADPH + H(+). The protein operates within mycotoxin biosynthesis; aflatoxin biosynthesis. Its function is as follows. Norsolorinic acid ketoreductase; part of the gene cluster that mediates the biosynthesis of aflatoxins, a group of polyketide-derived furanocoumarins, and part of the most toxic and carcinogenic compounds among the known mycotoxins. The four major aflatoxins produced by A.parasiticus are aflatoxin B1 (AFB1), aflatoxin B2 (AFB2), aflatoxin G1 (AFG1) and aflatoxin G2 (AFG2). Within the aflatoxin pathway, the norsolorinic acid ketoreductase aflD performs the second step by catalyzing the dehydration of norsolorinic acid (NOR) to form (1'S)-averantin (AVN). The biosynthesis of aflatoxins begins with the norsolorinic acid synthase aflC that combines a hexanoyl starter unit produced by the fatty acid synthase aflA/aflB and 7 malonyl-CoA extender units to synthesize the precursor NOR. The second step is the conversion of NOR to averantin and requires the norsolorinic acid ketoreductase aflD, which catalyzes the dehydration of norsolorinic acid to form (1'S)-averantin. The norsolorinic acid reductases aflE and aflF may also play a role in the conversion of NOR to AVN. The cytochrome P450 monooxygenase aflG then catalyzes the hydroxylation of AVN to 5'hydroxyaverantin (HAVN). The next step is performed by the 5'-hydroxyaverantin dehydrogenase aflH that transforms HAVN to 5'-oxoaverantin (OAVN) which is further converted to averufin (AVF) by aflK that plays a dual role in the pathway, as a 5'-oxoaverantin cyclase that mediates conversion of 5'-oxoaverantin, as well as a versicolorin B synthase in a later step in the pathway. The averufin oxidase aflI catalyzes the conversion of AVF to versiconal hemiacetal acetate (VHA). VHA is then the substrate for the versiconal hemiacetal acetate esterase aflJ to yield versiconal (VAL). Versicolorin B synthase aflK then converts VAL to versicolorin B (VERB) by closing the bisfuran ring of aflatoxin which is required for DNA-binding, thus giving to aflatoxin its activity as a mutagen. Then, the activity of the versicolorin B desaturase aflL leads to versicolorin A (VERA). A branch point starts from VERB since it can also be converted to dihydrodemethylsterigmatocystin (DMDHST), probably also by aflL, VERA being a precursor for aflatoxins B1 and G1, and DMDHST for aflatoxins B2 and G2. Next, the versicolorin reductase aflM and the cytochrome P450 monooxygenase aflN are involved in conversion of VERA to demethylsterigmatocystin (DMST). AflX and aflY seem also involved in this step, through probable aflX-mediated epoxide ring-opening step following versicolorin A oxidation and aflY-mediated Baeyer-Villiger oxidation required for the formation of the xanthone ring. The methyltransferase aflO then leads to the modification of DMST to sterigmatocystin (ST), and of DMDHST to dihydrosterigmatocystin (DHST). Both ST and DHST are then substrates of the O-methyltransferase aflP to yield O-methylsterigmatocystin (OMST) and dihydro-O-methylsterigmatocystin (DHOMST), respectively. Finally OMST is converted to aflatoxins B1 and G1, and DHOMST to aflatoxins B2 and G2, via the action of several enzymes including O-methylsterigmatocystin oxidoreductase aflQ, the cytochrome P450 monooxygenase aflU, but also the NADH-dependent flavin oxidoreductase nadA which is specifically required for the synthesis of AFG1. The chain is Norsolorinic acid ketoreductase from Aspergillus parasiticus (strain ATCC 56775 / NRRL 5862 / SRRC 143 / SU-1).